Here is a 331-residue protein sequence, read N- to C-terminus: Thiamine thiazole synthase (331 aa).

Residues Cys86, 107 to 108 (EA), Gly115, and Val183 contribute to the substrate site. Position 220 is a 2,3-didehydroalanine (Cys) (Cys220). Substrate is bound by residues Asp222, His237, Met289, and 299–301 (RMG).

It belongs to the THI4 family. Homooctamer. Requires Fe cation as cofactor. In terms of processing, during the catalytic reaction, a sulfide is transferred from Cys-220 to a reaction intermediate, generating a dehydroalanine residue.

It is found in the cytoplasm. The protein localises to the nucleus. The enzyme catalyses [ADP-thiazole synthase]-L-cysteine + glycine + NAD(+) = [ADP-thiazole synthase]-dehydroalanine + ADP-5-ethyl-4-methylthiazole-2-carboxylate + nicotinamide + 3 H2O + 2 H(+). Involved in biosynthesis of the thiamine precursor thiazole. Catalyzes the conversion of NAD and glycine to adenosine diphosphate 5-(2-hydroxyethyl)-4-methylthiazole-2-carboxylic acid (ADT), an adenylated thiazole intermediate. The reaction includes an iron-dependent sulfide transfer from a conserved cysteine residue of the protein to a thiazole intermediate. The enzyme can only undergo a single turnover, which suggests it is a suicide enzyme. May have additional roles in adaptation to various stress conditions and in DNA damage tolerance. This chain is Thiamine thiazole synthase, found in Emericella nidulans (strain FGSC A4 / ATCC 38163 / CBS 112.46 / NRRL 194 / M139) (Aspergillus nidulans).